The primary structure comprises 324 residues: Glycerol-3-phosphate dehydrogenase [NAD(P)+] (324 aa).

NADPH-binding residues include F11, R31, and K107. The sn-glycerol 3-phosphate site is built by K107 and G135. NADPH is bound at residue A139. Sn-glycerol 3-phosphate-binding residues include K190, D245, S255, R256, and N257. The active-site Proton acceptor is K190. R256 lines the NADPH pocket. NADPH is bound by residues V278 and E279.

This sequence belongs to the NAD-dependent glycerol-3-phosphate dehydrogenase family.

The protein resides in the cytoplasm. The enzyme catalyses sn-glycerol 3-phosphate + NAD(+) = dihydroxyacetone phosphate + NADH + H(+). The catalysed reaction is sn-glycerol 3-phosphate + NADP(+) = dihydroxyacetone phosphate + NADPH + H(+). The protein operates within membrane lipid metabolism; glycerophospholipid metabolism. Its function is as follows. Catalyzes the reduction of the glycolytic intermediate dihydroxyacetone phosphate (DHAP) to sn-glycerol 3-phosphate (G3P), the key precursor for phospholipid synthesis. The polypeptide is Glycerol-3-phosphate dehydrogenase [NAD(P)+] (Anaplasma phagocytophilum (strain HZ)).